The primary structure comprises 106 residues: Large ribosomal subunit protein eL36 (106 aa).

A compositionally biased stretch (basic and acidic residues) spans V75 to D93. The tract at residues V75–Y106 is disordered.

Belongs to the eukaryotic ribosomal protein eL36 family.

This is Large ribosomal subunit protein eL36 (RPL36) from Daucus carota (Wild carrot).